The following is a 444-amino-acid chain: D(2) dopamine receptor (444 aa).

Residues 1-37 (MDPLNLSWYDDDPESRNWSRPFNGSEGKADRPPYNYY) are Extracellular-facing. N-linked (GlcNAc...) asparagine glycans are attached at residues asparagine 5, asparagine 17, and asparagine 23. A helical transmembrane segment spans residues 38–60 (AMLLTLLIFVIVFGNVLVCMAVS). The Cytoplasmic portion of the chain corresponds to 61–70 (REKALQTTTN). Residues 71–93 (YLIVSLAVADLLVATLVMPWVVY) form a helical membrane-spanning segment. Residues 94-108 (LEVVGEWKFSRIHCD) are Extracellular-facing. The cysteines at positions 107 and 182 are disulfide-linked. A helical transmembrane segment spans residues 109–130 (IFVTLDVMMCTASILNLCAISI). Residues 131–151 (DRYTAVAMPMLYNTRYSSKRR) lie on the Cytoplasmic side of the membrane. Residues 152 to 172 (VTVMIAIVWVLSFTISCPMLF) traverse the membrane as a helical segment. Residues 173–188 (GLNNTDQNECIIANPA) lie on the Extracellular side of the membrane. The helical transmembrane segment at 189 to 213 (FVVYSSIVSFYVPFIVTLLVYIKIY) threads the bilayer. The interval 211 to 374 (KIYIVLRRRR…SQQKEKKATQ (164 aa)) is interaction with PPP1R9B. The Cytoplasmic segment spans residues 214-374 (IVLRRRRKRV…SQQKEKKATQ (161 aa)). The tract at residues 281–332 (MEMLSSTSPPERTRYSPIPPSHHQLTLPDPSHHGLHSTPDSPAKPEKNGHAK) is disordered. Residues 375-396 (MLAIVLGVFIICWLPFFITHIL) traverse the membrane as a helical segment. Residues 397 to 410 (NIHCDCNIPPVLYS) are Extracellular-facing. Cysteine 400 and cysteine 402 are disulfide-bonded. Residues 411 to 432 (AFTWLGYVNSAVNPIIYTTFNI) traverse the membrane as a helical segment. Residues 433–444 (EFRKAFLKILHC) are Cytoplasmic-facing. Residue cysteine 444 is the site of S-palmitoyl cysteine attachment.

The protein belongs to the G-protein coupled receptor 1 family. In terms of assembly, forms homo- and heterooligomers with DRD4. The interaction with DRD4 may modulate agonist-induced downstream signaling. Interacts with CADPS and CADPS2. Interacts with GPRASP1, PPP1R9B and CLIC6. Interacts with ARRB2. Interacts with HTR2A. Interacts with DRD1. Interacts with KCNA2. Post-translationally, palmitoylated. Palmitoylation which is required for proper localization to the plasma membrane and stability of the receptor could be carried on by ZDHHC4, ZDHHC3 and ZDHHC8.

The protein resides in the cell membrane. It localises to the golgi apparatus membrane. Functionally, dopamine receptor whose activity is mediated by G proteins which inhibit adenylyl cyclase. Positively regulates postnatal regression of retinal hyaloid vessels via suppression of VEGFR2/KDR activity, downstream of OPN5. The polypeptide is D(2) dopamine receptor (DRD2) (Bos taurus (Bovine)).